The chain runs to 65 residues: Adrenergic toxin rho-elapitoxin-Dp1a (65 aa).

4 disulfides stabilise this stretch: C3–C24, C17–C42, C46–C57, and C58–C63.

The protein belongs to the three-finger toxin family. Short-chain subfamily. Aminergic toxin sub-subfamily. Expressed by the venom gland.

The protein resides in the secreted. Functionally, this toxin shows activities on different G-protein coupled receptors. It is highly potent on various alpha-adrenoceptors (ADRA) (subnanomolar affinity for ADRA1A). Order of potency is the following: ADRA1A &gt; ADRA1B &gt; ADRA1D &gt; ADRA2C. It is also found to reversibly bind to muscarinic acetylcholine receptors (CHRM), but the affinity is much weaker (CHRM1 and CHRM2, Ki&gt;1 uM; CHRM3, Ki=140 nM; CHRM4, Ki=120 nM; CHRM5, Ki=350 nM). This is Adrenergic toxin rho-elapitoxin-Dp1a from Dendroaspis polylepis polylepis (Black mamba).